Here is a 423-residue protein sequence, read N- to C-terminus: UPF0229 protein Psyr_4632 (423 aa).

Residues 65–110 are disordered; it reads HHGRGGKQTVVHPGNKEFTTGEHIARPQGGGGGKGPGKAGNSGEGM. Residues 92–107 show a composition bias toward gly residues; sequence QGGGGGKGPGKAGNSG.

This sequence belongs to the UPF0229 family.

This Pseudomonas syringae pv. syringae (strain B728a) protein is UPF0229 protein Psyr_4632.